The sequence spans 230 residues: Ribosomal RNA small subunit methyltransferase I (230 aa).

Belongs to the methyltransferase superfamily. RsmI family.

It localises to the cytoplasm. The enzyme catalyses cytidine(1402) in 16S rRNA + S-adenosyl-L-methionine = 2'-O-methylcytidine(1402) in 16S rRNA + S-adenosyl-L-homocysteine + H(+). Functionally, catalyzes the 2'-O-methylation of the ribose of cytidine 1402 (C1402) in 16S rRNA. The sequence is that of Ribosomal RNA small subunit methyltransferase I from Hydrogenobaculum sp. (strain Y04AAS1).